The following is a 119-amino-acid chain: Large ribosomal subunit protein uL18 (119 aa).

The protein belongs to the universal ribosomal protein uL18 family. In terms of assembly, part of the 50S ribosomal subunit; part of the 5S rRNA/L5/L18/L25 subcomplex. Contacts the 5S and 23S rRNAs.

Functionally, this is one of the proteins that bind and probably mediate the attachment of the 5S RNA into the large ribosomal subunit, where it forms part of the central protuberance. The chain is Large ribosomal subunit protein uL18 from Clostridium beijerinckii (strain ATCC 51743 / NCIMB 8052) (Clostridium acetobutylicum).